The sequence spans 83 residues: MENDAGENVDLYVPRKCSASNRIIHAKDHASVQLSIVVVDPETGRQTDGTKTYAICGEIRRMGESDDCIVRLAKKDGLITKNF.

It belongs to the eukaryotic ribosomal protein eS21 family. Component of the 40S small ribosomal subunit. Interacts with sta.

The protein localises to the cytoplasm. It is found in the cytosol. It localises to the rough endoplasmic reticulum. May be an associated component of the ribosome rather than a core structural subunit. May act as a translation initiation factor. Has a role in regulation of cell proliferation in the hematopoietic organs and the imaginal disks of larva. The chain is Small ribosomal subunit protein eS21 (RpS21) from Drosophila grimshawi (Hawaiian fruit fly).